The chain runs to 110 residues: UPF0145 protein BLD_1357 (110 aa).

It belongs to the UPF0145 family.

This chain is UPF0145 protein BLD_1357, found in Bifidobacterium longum (strain DJO10A).